We begin with the raw amino-acid sequence, 376 residues long: CCA-adding enzyme (376 aa).

Positions 23 and 26 each coordinate ATP. Positions 23 and 26 each coordinate CTP. Mg(2+) contacts are provided by glutamate 36 and aspartate 38. Residues arginine 106, arginine 152, and arginine 155 each contribute to the ATP site. CTP contacts are provided by arginine 106, arginine 152, and arginine 155.

Belongs to the tRNA nucleotidyltransferase/poly(A) polymerase family. Bacterial CCA-adding enzyme type 2 subfamily. It depends on Mg(2+) as a cofactor.

It carries out the reaction a tRNA precursor + 2 CTP + ATP = a tRNA with a 3' CCA end + 3 diphosphate. It catalyses the reaction a tRNA with a 3' CCA end + 2 CTP + ATP = a tRNA with a 3' CCACCA end + 3 diphosphate. In terms of biological role, catalyzes the addition and repair of the essential 3'-terminal CCA sequence in tRNAs without using a nucleic acid template. Adds these three nucleotides in the order of C, C, and A to the tRNA nucleotide-73, using CTP and ATP as substrates and producing inorganic pyrophosphate. tRNA 3'-terminal CCA addition is required both for tRNA processing and repair. Also involved in tRNA surveillance by mediating tandem CCA addition to generate a CCACCA at the 3' terminus of unstable tRNAs. While stable tRNAs receive only 3'-terminal CCA, unstable tRNAs are marked with CCACCA and rapidly degraded. This Coxiella burnetii (strain RSA 331 / Henzerling II) protein is CCA-adding enzyme.